We begin with the raw amino-acid sequence, 259 residues long: Phosphatidylserine decarboxylase proenzyme (259 aa).

Residue S183 is the Schiff-base intermediate with substrate; via pyruvic acid of the active site. At S183 the chain carries Pyruvic acid (Ser); by autocatalysis.

Belongs to the phosphatidylserine decarboxylase family. PSD-A subfamily. In terms of assembly, heterodimer of a large membrane-associated beta subunit and a small pyruvoyl-containing alpha subunit. It depends on pyruvate as a cofactor. Is synthesized initially as an inactive proenzyme. Formation of the active enzyme involves a self-maturation process in which the active site pyruvoyl group is generated from an internal serine residue via an autocatalytic post-translational modification. Two non-identical subunits are generated from the proenzyme in this reaction, and the pyruvate is formed at the N-terminus of the alpha chain, which is derived from the carboxyl end of the proenzyme. The post-translation cleavage follows an unusual pathway, termed non-hydrolytic serinolysis, in which the side chain hydroxyl group of the serine supplies its oxygen atom to form the C-terminus of the beta chain, while the remainder of the serine residue undergoes an oxidative deamination to produce ammonia and the pyruvoyl prosthetic group on the alpha chain.

It localises to the cell membrane. The catalysed reaction is a 1,2-diacyl-sn-glycero-3-phospho-L-serine + H(+) = a 1,2-diacyl-sn-glycero-3-phosphoethanolamine + CO2. Its pathway is phospholipid metabolism; phosphatidylethanolamine biosynthesis; phosphatidylethanolamine from CDP-diacylglycerol: step 2/2. Functionally, catalyzes the formation of phosphatidylethanolamine (PtdEtn) from phosphatidylserine (PtdSer). This is Phosphatidylserine decarboxylase proenzyme from Neisseria gonorrhoeae (strain ATCC 700825 / FA 1090).